The chain runs to 595 residues: Aspartate--tRNA(Asp/Asn) ligase (595 aa).

E175 is a binding site for L-aspartate. The interval Q199–K202 is aspartate. The L-aspartate site is built by R221 and H451. R221–E223 provides a ligand contact to ATP. E485 is a binding site for ATP. R492 is a binding site for L-aspartate. Position 537–540 (G537–R540) interacts with ATP.

This sequence belongs to the class-II aminoacyl-tRNA synthetase family. Type 1 subfamily. Homodimer.

It localises to the cytoplasm. It carries out the reaction tRNA(Asx) + L-aspartate + ATP = L-aspartyl-tRNA(Asx) + AMP + diphosphate. Aspartyl-tRNA synthetase with relaxed tRNA specificity since it is able to aspartylate not only its cognate tRNA(Asp) but also tRNA(Asn). Reaction proceeds in two steps: L-aspartate is first activated by ATP to form Asp-AMP and then transferred to the acceptor end of tRNA(Asp/Asn). The chain is Aspartate--tRNA(Asp/Asn) ligase from Acidiphilium cryptum (strain JF-5).